The sequence spans 338 residues: Homoserine kinase (338 aa).

It belongs to the GHMP kinase family. Homoserine kinase subfamily.

The enzyme catalyses L-homoserine + ATP = O-phospho-L-homoserine + ADP + H(+). Its pathway is amino-acid biosynthesis; L-threonine biosynthesis; L-threonine from L-aspartate: step 4/5. Functionally, commits homoserine to the threonine biosynthesis pathway by catalyzing its O-phosphorylation. This chain is Homoserine kinase, found in Schizosaccharomyces pombe (strain 972 / ATCC 24843) (Fission yeast).